Consider the following 279-residue polypeptide: Large ribosomal subunit protein uL2 (279 aa).

Disordered stretches follow at residues 1 to 59 (MGIR…GGHK) and 224 to 279 (VAMN…KNKR). Composition is skewed to basic residues over residues 50 to 59 (TTRHKGGGHK) and 269 to 279 (VRRRRTGKNKR).

Belongs to the universal ribosomal protein uL2 family. In terms of assembly, part of the 50S ribosomal subunit. Forms a bridge to the 30S subunit in the 70S ribosome.

Its function is as follows. One of the primary rRNA binding proteins. Required for association of the 30S and 50S subunits to form the 70S ribosome, for tRNA binding and peptide bond formation. It has been suggested to have peptidyltransferase activity; this is somewhat controversial. Makes several contacts with the 16S rRNA in the 70S ribosome. This Arthrobacter sp. (strain FB24) protein is Large ribosomal subunit protein uL2.